Here is a 1249-residue protein sequence, read N- to C-terminus: MEEVITIAQIVHRGTDILSLNNEEIEALVDEIYSTLKGSNDIKNIRLIDFLFTLKDFVNHVRAEQSKLPDLSMPMEAYIRQLLVDPDVVPIVSEKKKELRVRPSTRKEIFLINGTHLAVPAEAPIEIYGLKLRLKSFSPQCFMRMAEIGSFSPETLGYVASGANLTNFIRVFMKCVDQETWKKNGEGVVVTTKENIIQFTHQYIELYKFLRSGGHSWLINRLAEEMVHRKLDREDQGSHISNIVETEEIEPEENIKRVIFFLKELSTMYSVSPVFTSGYMPLLYDLYRAGYLEVLWNPVEQKFLQHAEQREKEQMILQQVDMKLTEVITQARQYFKIMEEKIGRVQSDAIREILTMEGKVDDPNSILQEVIKACGKQEAELITTEYLNIKKQWELQEKNACAHLKLVKQLRSGLQYAELLKVLESIRVLYKEKNNTTNWNLCKACGFKLLCPHVDMLIQLQAAEASYDTMRTKLMKFSGINKEKENNQGLIYSYFCKICGEELAHFIQEDRTADVGVIGDLNSKLRIFIWQETMKACTFIHFGKLVDVKQFANIAVNVCLPLVYSIENIKKEEDYDPLTQLYAVIYIYAYILNLIYSSQKNKEFLTITIHGMKADSSLNAYVTFLLEKMMQQYSGIINQLSEITDQWIANNFREAFKKIIHQNGLQGLSVQDDTKVLLTEILLGPMYDYAATVARIDGSIPMHKPRTPKEAEYEFKTVIGRTPAELLSQKEFYDKIYTSKYRPDFTQLARLNDIYFQEESLRVWWGGRDEEKTSTLIYLRAYELFLKYLQNAPNFNSELAEFKTYENAYGEQKALLAQQGFYNIFDPNTGRADQRTRLFEYKRLPISTLYDERGLPHKWTIYVYKAVDSSQKPAEIEVTRKDVIKKIDNHYALADLRCSVCHVLQHEVGQLNIKKVQTALKASLEFNTFYAFYESRCPKGGLHDFQDKKCVKCGLFTYIIYDHLSQPELVHDYYNNYKDQYDKEKMSIRSIQIKKDMTTPSSETQPKPPQEPWTFDYGKIIKTAKILDISPAVIEAIGAMEGRSYADIREGQGAPPPPTSMDDPRLMAVDSAVRIFLYNYNCLRHVSTFNKPPMHVERLVKHLSYEEKEDLEKVLPNVVNEYHTTFKHLRVTDPASALLYSIEFLCVSFLTLYEIKEPSWVVNIVREFALTELNTIIQSEKLLSKPGAFNFMIFGEDFVCSGEDSSMDDISAYSSPGLFGEDIIDRLDDPFSIEDVDISLDVLDNLAPQ.

It belongs to the asfivirus M1249L family. As to quaternary structure, interacts with the minor capsid protein p17 and with the hexon capsid protein p72 capsomers; these interactions form a rigid zipper structure that stabilizes the capsomers. Interacts with host IRF3.

Its subcellular location is the virion. It is found in the host cytoplasm. Its function is as follows. Together with the penton and the other minor capsid proteins (p17, p49), forms a complicated network immediately below the outer capsid shell, stabilizing the whole capsid. In addition, blocks IFN-beta transactivation mediated by the cGAS-STING pathway and regulates the transcriptional activity of IFN-beta. Mechanistically, suppresses the phosphorylation of host key adapter protein TBK1 and degrades host IRF3 in the cytoplasm. In Ornithodoros (relapsing fever ticks), this protein is Minor capsid protein M1249L.